The sequence spans 119 residues: MALVQSDENDFHALREAQRMVDSCQDFADHLIVAEFLPHCRGVAYINIRTLEQVIYCVQLSRAGYRIVSYEFDDVADEVANCDTVYESAHQLLAGISPLYGEKYGFGREPLGKRKEKQS.

It belongs to the GSKIP family.

The polypeptide is Protein GSKIP homolog (Drosophila melanogaster (Fruit fly)).